The chain runs to 430 residues: Adenylosuccinate synthetase (430 aa).

GTP is bound by residues 13 to 19 and 41 to 43; these read GDEGKGK and GHT. Aspartate 14 functions as the Proton acceptor in the catalytic mechanism. Mg(2+)-binding residues include aspartate 14 and glycine 41. Residues 14-17, 39-42, threonine 130, arginine 144, glutamine 225, threonine 240, and arginine 304 contribute to the IMP site; these read DEGK and NAGH. The active-site Proton donor is the histidine 42. 300–306 provides a ligand contact to substrate; the sequence is ATTGRAR. GTP contacts are provided by residues arginine 306, 332 to 334, and 414 to 416; these read KLD and STG.

This sequence belongs to the adenylosuccinate synthetase family. As to quaternary structure, homodimer. The cofactor is Mg(2+).

The protein resides in the cytoplasm. It carries out the reaction IMP + L-aspartate + GTP = N(6)-(1,2-dicarboxyethyl)-AMP + GDP + phosphate + 2 H(+). It functions in the pathway purine metabolism; AMP biosynthesis via de novo pathway; AMP from IMP: step 1/2. Its function is as follows. Plays an important role in the de novo pathway of purine nucleotide biosynthesis. Catalyzes the first committed step in the biosynthesis of AMP from IMP. The protein is Adenylosuccinate synthetase of Pseudomonas paraeruginosa (strain DSM 24068 / PA7) (Pseudomonas aeruginosa (strain PA7)).